The chain runs to 406 residues: Cysteine--tRNA ligase (406 aa).

Cysteine 16 lines the Zn(2+) pocket. Residues 18 to 28 (PTVYSDVHIGN) carry the 'HIGH' region motif. Zn(2+) is bound by residues cysteine 192, histidine 218, and glutamate 222. The short motif at 250–254 (KMAKS) is the 'KMSKS' region element. Lysine 253 serves as a coordination point for ATP.

The protein belongs to the class-I aminoacyl-tRNA synthetase family. As to quaternary structure, monomer. Requires Zn(2+) as cofactor.

The protein resides in the cytoplasm. The catalysed reaction is tRNA(Cys) + L-cysteine + ATP = L-cysteinyl-tRNA(Cys) + AMP + diphosphate. This is Cysteine--tRNA ligase from Mesomycoplasma hyopneumoniae (strain J / ATCC 25934 / NCTC 10110) (Mycoplasma hyopneumoniae).